Reading from the N-terminus, the 259-residue chain is DNA-directed RNA polymerase subunit Rpo3 (259 aa).

Belongs to the archaeal Rpo3/eukaryotic RPB3 RNA polymerase subunit family. In terms of assembly, part of the RNA polymerase complex.

The protein resides in the cytoplasm. The enzyme catalyses RNA(n) + a ribonucleoside 5'-triphosphate = RNA(n+1) + diphosphate. In terms of biological role, DNA-dependent RNA polymerase (RNAP) catalyzes the transcription of DNA into RNA using the four ribonucleoside triphosphates as substrates. The chain is DNA-directed RNA polymerase subunit Rpo3 from Pyrococcus horikoshii (strain ATCC 700860 / DSM 12428 / JCM 9974 / NBRC 100139 / OT-3).